We begin with the raw amino-acid sequence, 1181 residues long: Katanin p80 WD40 repeat-containing subunit B1 homolog KTN80.2 (1181 aa).

WD repeat units lie at residues 13 to 53, 56 to 95, 98 to 137, 140 to 181, 183 to 221, 224 to 264, and 266 to 303; these read AHSA…SLMS, GHTSAVDSVAFDSAEVLVLAGASSGVIKLWDVEEAKMVRA, GHRSNCSAVEFHPFGEFLASGSSDANLKIWDIRKKGCIQT, GHSR…HEFK, HEGPIRSLDFHPLEFLLATGSADRTVKFWDLETFELIGS, PEAT…DGVD, and GWSTLGDLCISEGKLLGCSYYQNSVGIWVSDISQIEPY. Residues 114–130 carry the DWD box motif; the sequence is FLASGSSDANLKIWDIR. Disordered stretches follow at residues 361-383, 503-597, 702-739, 754-869, and 988-1008; these read AHKSGSLSTPATSTGQAGDNKSL, KPPR…ESKS, TSMATDTPPVTSTRPDRTSATNLTSDVSGVTSKRQTRT, KMKS…VIST, and TKTQQSSDILTQKEEPQISGR. Composition is skewed to polar residues over residues 365-379 and 509-526; these read GSLSTPATSTGQAGD and RSPSTKYNEARWATSTDS. Basic and acidic residues-rich tracts occupy residues 530–553 and 569–585; these read DSKKNGLESSRDMDLPTGLRDDRG and RSERVLSPEKAGDELKS. Polar residues-rich tracts occupy residues 703–739, 754–791, 822–841, and 850–859; these read SMATDTPPVTSTRPDRTSATNLTSDVSGVTSKRQTRT, KMKSDEPSITSTWPDRTSATDLTSDVSGVISSRQTRTS, SATNLTSDESPVTSTRQAKT, and ILNQRQTTNM. A compositionally biased stretch (basic and acidic residues) spans 998–1008; it reads TQKEEPQISGR.

It belongs to the WD repeat KATNB1 family. Component of KTN80-KTN1 complexes composed of a hexamer of KTN1-KTN80 heterodimers that sense microtubule (MT) geometry to confer precise MT severing. Interacts directly with AAA1/KTN1. Interacts with subunits of the CUL4-based E3 ligase complex DDB1A and DDB1B. As to expression, expressed at low levels in siliques, flowers, leaves, stems and roots.

It localises to the cytoplasm. It is found in the cytoskeleton. May participate in a complex which severs microtubules in an ATP-dependent manner. Microtubule severing may promote rapid reorganization of cellular microtubule arrays. Confers precision to microtubule (MT) severing by specific targeting of KTN1 to MT cleavage sites such as crossover or branching nucleation sites. Together with other KTN80s, regulates cell elongation by modulating MT organization. Negative regulator of abscisic acid (ABA) responses. May function as a substrate receptor for cullin-RING ubiquitin ligase 4 complexes (CRL4), a family of E3 ligases involved in protein degradation. This is Katanin p80 WD40 repeat-containing subunit B1 homolog KTN80.2 from Arabidopsis thaliana (Mouse-ear cress).